Reading from the N-terminus, the 355-residue chain is 3-dehydroquinate synthase (355 aa).

Residues 71–76, 105–109, 129–130, lysine 142, and lysine 151 contribute to the NAD(+) site; these read EGEERK, GVVGD, and TS. Positions 184, 246, and 263 each coordinate Zn(2+).

It belongs to the sugar phosphate cyclases superfamily. Dehydroquinate synthase family. Co(2+) serves as cofactor. Zn(2+) is required as a cofactor. Requires NAD(+) as cofactor.

The protein resides in the cytoplasm. The catalysed reaction is 7-phospho-2-dehydro-3-deoxy-D-arabino-heptonate = 3-dehydroquinate + phosphate. The protein operates within metabolic intermediate biosynthesis; chorismate biosynthesis; chorismate from D-erythrose 4-phosphate and phosphoenolpyruvate: step 2/7. In terms of biological role, catalyzes the conversion of 3-deoxy-D-arabino-heptulosonate 7-phosphate (DAHP) to dehydroquinate (DHQ). This is 3-dehydroquinate synthase from Streptococcus pneumoniae (strain ATCC 700669 / Spain 23F-1).